The sequence spans 214 residues: Homeobox protein HEX homolog pha-2 (214 aa).

Disordered regions lie at residues 1–50 and 180–214; these read MDQK…QKME and RRVRKDGEDEDEMPNGASARSLGQLQSSNPFLSHG. Residues 24–34 show a composition bias toward low complexity; it reads SSESPIPTGSE. Polar residues predominate over residues 35–44; that stretch reads CSLNESSDTT. Positions 124–183 form a DNA-binding region, homeobox; sequence RKGGQIRFTNEQTDALEHKFDSHKYLSPQERKKLAKSLSLSERQVKTWFQNRRAKWRRVR. Over residues 200 to 214 the composition is skewed to polar residues; it reads SLGQLQSSNPFLSHG.

Its subcellular location is the nucleus. Transcriptional repressor. Involved in pharyngeal development and required for the formation of the pharyngeal isthmus. Plays a role in modulating cytoskeleton in the muscle cells of the isthmus. Regulates expression of the acetylcholinesterase genes ace-1 and ace-2. May regulate its own expression. The chain is Homeobox protein HEX homolog pha-2 from Caenorhabditis elegans.